We begin with the raw amino-acid sequence, 525 residues long: MGNKWCGIFLTILLLAQMSQTIFGQNPNIPADDHHGAVPPELVMSAVVLKDGRIANYYINATVIETEFNNNPCPCVNQTELKAERLKVLKLWSAYTNYDQQYILDSYEQFATPDTLPDGTVNQFLHQFVVNGYATYSANSVAAEYALQANDANIHLFSELDPVSVEWQADNITVIYKIITNYTLPGLPGAPILDGFVNTHYVKFVPCKAEIWIDIMTQDSLVSTYLAAAQSNHPASDICDKIQQACTGPNQVYDSYESCLNYMSVVVNHTSFCPTGSLIANSSGCHYFHASSALNYPEIHCQHVRPYDSPTCQDFCLTQGCGNCDSNAECVFVSGSNSIVPKYQCKCKSGYVGNGTHCSPVTCSAQWQCPSEYNYGSCQNGLCGCNSGNGFKWVPDQATVNSHQACQCSENETVQWYNGVPECMPIGRCRYVWQCPQAATQYTSITCTKYGQNALVPFNTCLCNYGYDNLGFSYKCQCSVPKREIWSNVRQGTLCLAPNECTDNYHCASNNCQVQPGQWLGTCAA.

Residues 1-24 (MGNKWCGIFLTILLLAQMSQTIFG) form the signal peptide. Residues Asn-60, Asn-77, Asn-171, Asn-181, Asn-268, and Asn-281 are each glycosylated (N-linked (GlcNAc...) asparagine; by host). Residues 317 to 359 (LTQGCGNCDSNAECVFVSGSNSIVPKYQCKCKSGYVGNGTHCS) enclose the EGF-like domain. Cystine bridges form between Cys-321-Cys-330, Cys-324-Cys-345, and Cys-347-Cys-358. Residues Asn-354 and Asn-411 are each glycosylated (N-linked (GlcNAc...) asparagine; by host).

It is found in the secreted. The protein is Putative EGF-like domain-containing protein R659 of Acanthamoeba polyphaga (Amoeba).